Consider the following 310-residue polypeptide: MPVSTTLLQSDLPGLPLRHRGKVRDVFDIPRDRLPADAPPGDYLLMVATDRLSAFDVVLPDPIPGKGEMLCQVSNFWFHKTEHLMPNHLVDIRVEQVLPEGVDPALYAKRAVVTRKLKPVPVEAIARGYLIGSGWKDYQRTGKISGIELPDGLRQAEKLPEPIFTPSTKAAVGDHDENIDFDAMVKTVGAELAERVRDATLRIYRFAADFAAECGILLADTKFEFGTDADGRLYVMDEMLTPDSSRYWPADQYELGTSPPSYDKQFVRDYLETLDWGKTAPGPSLPADVIDRTRAKYAEALQRLAGISVD.

It belongs to the SAICAR synthetase family.

The catalysed reaction is 5-amino-1-(5-phospho-D-ribosyl)imidazole-4-carboxylate + L-aspartate + ATP = (2S)-2-[5-amino-1-(5-phospho-beta-D-ribosyl)imidazole-4-carboxamido]succinate + ADP + phosphate + 2 H(+). The protein operates within purine metabolism; IMP biosynthesis via de novo pathway; 5-amino-1-(5-phospho-D-ribosyl)imidazole-4-carboxamide from 5-amino-1-(5-phospho-D-ribosyl)imidazole-4-carboxylate: step 1/2. This chain is Phosphoribosylaminoimidazole-succinocarboxamide synthase, found in Xanthomonas oryzae pv. oryzae (strain MAFF 311018).